Reading from the N-terminus, the 961-residue chain is Mitogen-activated protein kinase kinase kinase 13-B (961 aa).

The segment at 89–115 (RDQDEPENTAPQGSSHSGDGGNNSANE) is disordered. The segment covering 101 to 114 (GSSHSGDGGNNSAN) has biased composition (low complexity). The region spanning 171-412 (ISELQWLGSG…FRQILMHLDI (242 aa)) is the Protein kinase domain. Residues 177 to 185 (LGSGAQGAV) and Lys198 contribute to the ATP site. Asp282 functions as the Proton acceptor in the catalytic mechanism. Leucine-zipper stretches follow at residues 436 to 457 (VKKHFEKIKSEGTCIHRLDEEL) and 489 to 510 (LSSIMLQLEVREKELTRREQTV). A coiled-coil region spans residues 460–497 (RRREELRHALDIREHYERKLERANNLYMELSSIMLQLE). 3 disordered regions span residues 507–644 (EQTV…ETSQ), 796–874 (TPPA…DVAC), and 933–961 (NAESDCDSSEGECSDATVRTNNPVNSSTW). Residues 563-580 (AEGSAASASPISGSPKTS) show a composition bias toward low complexity. The segment covering 586 to 598 (GRYRSKPRHRRGN) has biased composition (basic residues). Residues 613–628 (QESPAPSQQSSQHQTP) show a composition bias toward low complexity. Acidic residues predominate over residues 813–826 (DSSEGEEGEVDSEV). Positions 814–827 (SSEGEEGEVDSEVE) are acidic. Polar residues predominate over residues 839-854 (STCQSYSTFSSENFSV). Positions 934–945 (AESDCDSSEGEC) are enriched in acidic residues. A compositionally biased stretch (polar residues) spans 949–961 (TVRTNNPVNSSTW).

Belongs to the protein kinase superfamily. Ser/Thr protein kinase family.

It localises to the cytoplasm. The protein resides in the membrane. It catalyses the reaction L-seryl-[protein] + ATP = O-phospho-L-seryl-[protein] + ADP + H(+). The catalysed reaction is L-threonyl-[protein] + ATP = O-phospho-L-threonyl-[protein] + ADP + H(+). Its function is as follows. May have a role in the JNK signaling pathway. The polypeptide is Mitogen-activated protein kinase kinase kinase 13-B (map3k13-b) (Xenopus laevis (African clawed frog)).